The following is a 535-amino-acid chain: Thermosome subunit gamma (535 aa).

Belongs to the TCP-1 chaperonin family. In terms of assembly, forms a Heterooligomeric complex of two stacked eight-membered rings.

Functionally, molecular chaperone; binds unfolded polypeptides in vitro, and has a weak ATPase activity. This chain is Thermosome subunit gamma (thsC), found in Saccharolobus solfataricus (strain ATCC 35092 / DSM 1617 / JCM 11322 / P2) (Sulfolobus solfataricus).